Consider the following 485-residue polypeptide: Glutamate--tRNA ligase 1 (485 aa).

Residues 10 to 20 (PSPTGAIHIGN) carry the 'HIGH' region motif. A 'KMSKS' region motif is present at residues 252–256 (KLSKR). Lysine 255 lines the ATP pocket.

It belongs to the class-I aminoacyl-tRNA synthetase family. Glutamate--tRNA ligase type 1 subfamily. Monomer.

It is found in the cytoplasm. It catalyses the reaction tRNA(Glu) + L-glutamate + ATP = L-glutamyl-tRNA(Glu) + AMP + diphosphate. Catalyzes the attachment of glutamate to tRNA(Glu) in a two-step reaction: glutamate is first activated by ATP to form Glu-AMP and then transferred to the acceptor end of tRNA(Glu). The polypeptide is Glutamate--tRNA ligase 1 (Thermoanaerobacter sp. (strain X514)).